The chain runs to 630 residues: Scarecrow-like protein 34 (630 aa).

Residues 240-628 enclose the GRAS domain; sequence KKKKSQVVDF…RTLYASSCWV (389 aa). Residues 247-312 are leucine repeat I (LRI); sequence VDFRTLLTHC…GSTGPMIQTY (66 aa). The interval 331-396 is VHIID; the sequence is YRVYLSSSPF…DVPRKLRITG (66 aa). The VHIID motif lies at 362–366; the sequence is LHIVD. A leucine repeat II (LRII) region spans residues 412–444; that stretch reads ETGRRLAEYCKRFNVPFEYKAIASQNWETIRIE. The interval 454 to 549 is PFYRE; it reads LAVNAGLRLK…REFYGREAMN (96 aa). Positions 552-628 are SAW; that stretch reads ACEEADRVER…RTLYASSCWV (77 aa).

The protein belongs to the GRAS family.

It is found in the nucleus. In terms of biological role, probable transcription factor involved in plant development. In Arabidopsis thaliana (Mouse-ear cress), this protein is Scarecrow-like protein 34 (SCL34).